The chain runs to 876 residues: Serrate RNA effector molecule homolog (876 aa).

The interval 1 to 90 (MGDSDDEYDR…RRDWDEHSSD (90 aa)) is disordered. An N-acetylglycine modification is found at Gly2. Ser4 bears the Phosphoserine mark. Tyr8 bears the Phosphotyrosine mark. Over residues 8–73 (YDRRRRDKFR…ERFSPPRHEL (66 aa)) the composition is skewed to basic and acidic residues. Phosphoserine is present on residues Ser67, Ser74, and Ser136. A Glycyl lysine isopeptide (Lys-Gly) (interchain with G-Cter in SUMO2) cross-link involves residue Lys150. A disordered region spans residues 272 to 413 (EEEEQAGKPG…PKDAPGLECK (142 aa)). The span at 297–347 (DGERKANEKDDKKEDGKQAENESSSDDKIKKSEGDGDKEEKKEDSEKEAKK) shows a compositional bias: basic and acidic residues. Positions 370–387 (SESESESGQAEEEKEEAD) are enriched in acidic residues. The span at 388-413 (ETLKEKEKPKEEEREKPKDAPGLECK) shows a compositional bias: basic and acidic residues. Residue Ser493 is modified to Phosphoserine. Thr544 carries the post-translational modification Phosphothreonine. The residue at position 570 (Ser570) is a Phosphoserine. The tract at residues 575–597 (ELLGSSGGAPPEEPPKEGNPAEI) is disordered. Thr671 carries the phosphothreonine modification. Position 679 is a phosphoserine (Ser679). 3 positions are modified to omega-N-methylarginine: Arg833, Arg840, and Arg850. The tract at residues 835-854 (NYDAFRGQGGYPGKPRNRMV) is disordered.

This sequence belongs to the ARS2 family. Interacts with CASP8AP2, ERBB4, NCBP1/CBP80 and DROSHA. Interacts with LUZP4. Interacts with NCBP2/CBP20 and NCBP3. Interacts with MTREX.

Its subcellular location is the nucleus. The protein resides in the nucleoplasm. The protein localises to the cytoplasm. Its function is as follows. Acts as a mediator between the cap-binding complex (CBC) and the primary microRNAs (miRNAs) processing machinery during cell proliferation. Contributes to the stability and delivery of capped primary miRNA transcripts to the primary miRNA processing complex containing DGCR8 and DROSHA, thereby playing a role in RNA-mediated gene silencing (RNAi) by miRNAs. Binds capped RNAs (m7GpppG-capped RNA); however interaction is probably mediated via its interaction with NCBP1/CBP80 component of the CBC complex. Involved in cell cycle progression at S phase. Does not directly confer arsenite resistance but rather modulates arsenic sensitivity. Independently of its activity on miRNAs, necessary and sufficient to promote neural stem cell self-renewal. Does so by directly binding SOX2 promoter and positively regulating its transcription. This Bos taurus (Bovine) protein is Serrate RNA effector molecule homolog (SRRT).